A 353-amino-acid polypeptide reads, in one-letter code: Quinolinate synthase (353 aa).

Iminosuccinate contacts are provided by histidine 47 and serine 68. Position 113 (cysteine 113) interacts with [4Fe-4S] cluster. Residues 139–141 (YAN) and serine 156 contribute to the iminosuccinate site. Cysteine 200 lines the [4Fe-4S] cluster pocket. Iminosuccinate is bound by residues 226 to 228 (HPE) and threonine 243. Position 297 (cysteine 297) interacts with [4Fe-4S] cluster.

Belongs to the quinolinate synthase family. Type 1 subfamily. Requires [4Fe-4S] cluster as cofactor.

The protein localises to the cytoplasm. The enzyme catalyses iminosuccinate + dihydroxyacetone phosphate = quinolinate + phosphate + 2 H2O + H(+). The protein operates within cofactor biosynthesis; NAD(+) biosynthesis; quinolinate from iminoaspartate: step 1/1. Its function is as follows. Catalyzes the condensation of iminoaspartate with dihydroxyacetone phosphate to form quinolinate. The sequence is that of Quinolinate synthase from Yersinia pestis bv. Antiqua (strain Antiqua).